Consider the following 533-residue polypeptide: Lanosterol 14-alpha demethylase (533 aa).

Cys472 is a heme binding site.

Belongs to the cytochrome P450 family. It depends on heme as a cofactor.

Its subcellular location is the membrane. It catalyses the reaction a 14alpha-methyl steroid + 3 reduced [NADPH--hemoprotein reductase] + 3 O2 = a Delta(14) steroid + formate + 3 oxidized [NADPH--hemoprotein reductase] + 4 H2O + 4 H(+). It carries out the reaction a 14alpha-methyl steroid + reduced [NADPH--hemoprotein reductase] + O2 = a 14alpha-hydroxymethyl steroid + oxidized [NADPH--hemoprotein reductase] + H2O + H(+). The enzyme catalyses a 14alpha-hydroxymethyl steroid + reduced [NADPH--hemoprotein reductase] + O2 = a 14alpha-formyl steroid + oxidized [NADPH--hemoprotein reductase] + 2 H2O + H(+). The catalysed reaction is a 14alpha-formyl steroid + reduced [NADPH--hemoprotein reductase] + O2 = a Delta(14) steroid + formate + oxidized [NADPH--hemoprotein reductase] + H2O + 2 H(+). It catalyses the reaction lanosterol + 3 reduced [NADPH--hemoprotein reductase] + 3 O2 = 4,4-dimethyl-5alpha-cholesta-8,14,24-trien-3beta-ol + formate + 3 oxidized [NADPH--hemoprotein reductase] + 4 H2O + 4 H(+). It carries out the reaction lanosterol + reduced [NADPH--hemoprotein reductase] + O2 = 32-hydroxylanosterol + oxidized [NADPH--hemoprotein reductase] + H2O + H(+). The enzyme catalyses 32-hydroxylanosterol + reduced [NADPH--hemoprotein reductase] + O2 = 32-oxolanosterol + oxidized [NADPH--hemoprotein reductase] + 2 H2O + H(+). The catalysed reaction is 32-oxolanosterol + reduced [NADPH--hemoprotein reductase] + O2 = 4,4-dimethyl-5alpha-cholesta-8,14,24-trien-3beta-ol + formate + oxidized [NADPH--hemoprotein reductase] + H2O + 2 H(+). It catalyses the reaction eburicol + 3 reduced [NADPH--hemoprotein reductase] + 3 O2 = 14-demethyleburicol + formate + 3 oxidized [NADPH--hemoprotein reductase] + 4 H2O + 4 H(+). It carries out the reaction eburicol + reduced [NADPH--hemoprotein reductase] + O2 = 32-hydroxyeburicol + oxidized [NADPH--hemoprotein reductase] + H2O + H(+). The enzyme catalyses 32-hydroxyeburicol + reduced [NADPH--hemoprotein reductase] + O2 = 32-oxoeburicol + oxidized [NADPH--hemoprotein reductase] + 2 H2O + H(+). The catalysed reaction is 32-oxoeburicol + reduced [NADPH--hemoprotein reductase] + O2 = 14-demethyleburicol + formate + oxidized [NADPH--hemoprotein reductase] + H2O + 2 H(+). It functions in the pathway steroid biosynthesis; zymosterol biosynthesis; zymosterol from lanosterol: step 1/6. Functionally, sterol 14alpha-demethylase that plays a critical role in the third module of ergosterol biosynthesis pathway, being ergosterol the major sterol component in fungal membranes that participates in a variety of functions. The third module or late pathway involves the ergosterol synthesis itself through consecutive reactions that mainly occur in the endoplasmic reticulum (ER) membrane. In filamentous fungi, during the initial step of this module, lanosterol (lanosta-8,24-dien-3beta-ol) can be metabolized to eburicol. Sterol 14alpha-demethylase catalyzes the three-step oxidative removal of the 14alpha-methyl group (C-32) of both these sterols in the form of formate, and converts eburicol and lanosterol to 14-demethyleburicol (4,4,24-trimethylergosta-8,14,24(28)-trienol) and 4,4-dimethyl-5alpha-cholesta-8,14,24-trien-3beta-ol, respectively, which are further metabolized by other enzymes in the pathway to ergosterol. Can also use substrates not intrinsic to fungi, such as 24,25-dihydrolanosterol (DHL), producing 4,4-dimethyl-8,14-cholestadien-3-beta-ol, but at lower rates than the endogenous substrates. The sequence is that of Lanosterol 14-alpha demethylase (ERG11) from Candida glabrata (strain ATCC 2001 / BCRC 20586 / JCM 3761 / NBRC 0622 / NRRL Y-65 / CBS 138) (Yeast).